The sequence spans 367 residues: Female-specific protein transformer (367 aa).

Residues 86-280 are disordered; that stretch reads ESISSKKIKS…HRHHRSQERS (195 aa). The segment covering 109-129 has biased composition (polar residues); sequence VKQNSPDVTQKFTKKYGSSEN. Residues 130–144 show a composition bias toward basic and acidic residues; it reads PDFRRHSSYEKDNYH. Residues 195-223 show a composition bias toward basic residues; sequence NRRRSSHRSRRGSGSPRSRRYTSRHRRRS. Residues 229–238 are compositionally biased toward basic and acidic residues; that stretch reads TSWKHNPEHR. Basic residues predominate over residues 239–257; it reads TSRRSRTRSPRGNRSRRRS.

In terms of biological role, sex differentiation protein controlling female somatic sexual differentiation. May act by promoting the formation of a splicing enhancer complex. This chain is Female-specific protein transformer, found in Musca domestica (House fly).